The following is a 372-amino-acid chain: Protein REVEILLE 7 (372 aa).

The HTH myb-type domain maps to 71-125 (TVTKQREKWSEEEHDRFLEAIKLYGRGWRQIQEHIGTKTAVQIRSHAQKFFSKMA). Positions 98 to 121 (WRQIQEHIGTKTAVQIRSHAQKFF) form a DNA-binding region, H-T-H motif. The segment at 124 to 204 (MAQEADSRSE…RCSSPNSCTS (81 aa)) is disordered. The segment covering 145-155 (RPKRKPAHPYP) has biased composition (basic residues). Pro residues predominate over residues 156–169 (RKSPVPYTQSPPPN). A compositionally biased stretch (polar residues) spans 178–204 (KSPTSVLSSFGSEDQVNRCSSPNSCTS).

It is found in the nucleus. Its function is as follows. Transcription factor involved in phytochrome A-mediated cotyledon opening. Controlled by the central oscillator mediated by LHY and CCA1. Part of a regulatory circadian feedback loop. Regulates its own expression. In Arabidopsis thaliana (Mouse-ear cress), this protein is Protein REVEILLE 7 (RVE7).